Reading from the N-terminus, the 1061-residue chain is Carbamoyl phosphate synthase large chain (1061 aa).

The tract at residues 1 to 401 (MPKRTDVHKI…ALQKAVRSLE (401 aa)) is carboxyphosphate synthetic domain. Residues R129, R169, G175, G176, K208, I210, E215, G241, I242, H243, Q284, and E298 each coordinate ATP. An ATP-grasp 1 domain is found at 133-327 (KDLMQELNEP…IAKLAAKIAV (195 aa)). Residues Q284, E298, and N300 each coordinate Mg(2+). The Mn(2+) site is built by Q284, E298, and N300. The segment at 402–546 (IDEKDLISAK…YSSYDLENES (145 aa)) is oligomerization domain. The tract at residues 547 to 929 (KKSDKKSVLV…ALYKAFTGAK (383 aa)) is carbamoyl phosphate synthetic domain. Residues 671–861 (DQTIKNLGLK…MAQVATRVIL (191 aa)) enclose the ATP-grasp 2 domain. 10 residues coordinate ATP: R707, A746, L748, E752, G777, V778, H779, S780, Q820, and E832. Q820, E832, and N834 together coordinate Mg(2+). Mn(2+)-binding residues include Q820, E832, and N834. The MGS-like domain occupies 930-1061 (MELPDNGNVL…ENRSFATNSL (132 aa)). Residues 930–1061 (MELPDNGNVL…ENRSFATNSL (132 aa)) are allosteric domain.

Belongs to the CarB family. Composed of two chains; the small (or glutamine) chain promotes the hydrolysis of glutamine to ammonia, which is used by the large (or ammonia) chain to synthesize carbamoyl phosphate. Tetramer of heterodimers (alpha,beta)4. The cofactor is Mg(2+). Mn(2+) is required as a cofactor.

The enzyme catalyses hydrogencarbonate + L-glutamine + 2 ATP + H2O = carbamoyl phosphate + L-glutamate + 2 ADP + phosphate + 2 H(+). It carries out the reaction hydrogencarbonate + NH4(+) + 2 ATP = carbamoyl phosphate + 2 ADP + phosphate + 2 H(+). Its pathway is amino-acid biosynthesis; L-arginine biosynthesis; carbamoyl phosphate from bicarbonate: step 1/1. The protein operates within pyrimidine metabolism; UMP biosynthesis via de novo pathway; (S)-dihydroorotate from bicarbonate: step 1/3. Its function is as follows. Large subunit of the glutamine-dependent carbamoyl phosphate synthetase (CPSase). CPSase catalyzes the formation of carbamoyl phosphate from the ammonia moiety of glutamine, carbonate, and phosphate donated by ATP, constituting the first step of 2 biosynthetic pathways, one leading to arginine and/or urea and the other to pyrimidine nucleotides. The large subunit (synthetase) binds the substrates ammonia (free or transferred from glutamine from the small subunit), hydrogencarbonate and ATP and carries out an ATP-coupled ligase reaction, activating hydrogencarbonate by forming carboxy phosphate which reacts with ammonia to form carbamoyl phosphate. The protein is Carbamoyl phosphate synthase large chain of Ligilactobacillus salivarius (strain UCC118) (Lactobacillus salivarius).